We begin with the raw amino-acid sequence, 294 residues long: Oligopeptide transport system permease protein OppC (294 aa).

A run of 6 helical transmembrane segments spans residues 27-47 (MISTIFLVAVFLIVYIYSMFL), 94-114 (IAFAVTLITLVVGNILGVITG), 127-147 (FTDFVMILPSMMIIIVFVTII), 151-171 (NSWSLIGIISIFSWIGTTRLI), 202-224 (IWPNLSTLVIAEATLVFAGNIGL), and 260-280 (WTWVPATVVILIVVLAIIFIG). Residues 88-280 (ARNSFNIAFA…IVVLAIIFIG (193 aa)) enclose the ABC transmembrane type-1 domain.

It belongs to the binding-protein-dependent transport system permease family. OppBC subfamily. The complex is composed of two ATP-binding proteins (OppD and OppF), two transmembrane proteins (OppB and OppC) and a solute-binding protein (OppA).

Its subcellular location is the cell membrane. Part of the ABC transporter complex OppABCDF involved in the uptake of oligopeptides. Probably responsible for the translocation of the substrate across the membrane. The polypeptide is Oligopeptide transport system permease protein OppC (Lactococcus lactis subsp. cremoris (strain SK11)).